Reading from the N-terminus, the 832-residue chain is DNA polymerase I, thermostable (832 aa).

In terms of domain architecture, 5'-3' exonuclease spans 175 to 260; that stretch reads RPDQWADYRA…DLPLEVDFAK (86 aa). The tract at residues 410–832 is polymerase; it reads ERLFANLWGR…IGEDWLSAKE (423 aa).

The protein belongs to the DNA polymerase type-A family.

The enzyme catalyses DNA(n) + a 2'-deoxyribonucleoside 5'-triphosphate = DNA(n+1) + diphosphate. In addition to polymerase activity, this DNA polymerase exhibits 5'-3' exonuclease activity. Unlikely to have 3'-5' exonuclease activity due to absence of a 3'-5' exonuclease domain. This Thermus aquaticus protein is DNA polymerase I, thermostable (polA).